We begin with the raw amino-acid sequence, 210 residues long: Glutathione S-transferase P 1 (210 aa).

A GST N-terminal domain is found at 2–81 (PPYTIVYFPV…HLGRSLGLYG (80 aa)). The residue at position 4 (tyrosine 4) is a Phosphotyrosine; by EGFR. Residues tyrosine 8, arginine 14, tryptophan 39, lysine 45, and 52–53 (QL) contribute to the glutathione site. Threonine 62 bears the Phosphothreonine mark. Residue 65–66 (QS) participates in glutathione binding. The GST C-terminal domain occupies 83-204 (NQREAAQMDM…SSPEHVNRPI (122 aa)). An N6-succinyllysine mark is found at lysine 103 and lysine 116. Lysine 128 is subject to N6-acetyllysine.

In terms of assembly, homodimer. Interacts with CDK5. In terms of tissue distribution, ubiquitously expressed.

It is found in the cytoplasm. The protein resides in the mitochondrion. It localises to the nucleus. It catalyses the reaction RX + glutathione = an S-substituted glutathione + a halide anion + H(+). The enzyme catalyses prostaglandin J2 + glutathione = prostaglandin J2-S-(R)-glutathione. The catalysed reaction is prostaglandin J2 + glutathione = prostaglandin J2-S-(S)-glutathione. It carries out the reaction prostaglandin A2 + glutathione = prostaglandin A2-S-(S)-glutathione. It catalyses the reaction 11(S)-hydroxy-14(S),15(S)-epoxy-(5Z,8Z,12E)-eicosatrienoate + glutathione = (11S,15S)-dihydroxy-14(R)-S-glutathionyl-(5Z,8Z,12E)-eicosatrienoate. Conjugation of reduced glutathione to a wide number of exogenous and endogenous hydrophobic electrophiles. Involved in the formation of glutathione conjugates of both prostaglandin A2 (PGA2) and prostaglandin J2 (PGJ2). Participates in the formation of novel hepoxilin regioisomers. Negatively regulates CDK5 activity via p25/p35 translocation to prevent neurodegeneration. The protein is Glutathione S-transferase P 1 of Mus musculus (Mouse).